A 152-amino-acid polypeptide reads, in one-letter code: 6,7-dimethyl-8-ribityllumazine synthase (152 aa).

Residues Phe-24, 56–58 (SFE), and 80–82 (VVV) each bind 5-amino-6-(D-ribitylamino)uracil. 85 to 86 (ET) provides a ligand contact to (2S)-2-hydroxy-3-oxobutyl phosphate. His-88 (proton donor) is an active-site residue. Residue Phe-113 coordinates 5-amino-6-(D-ribitylamino)uracil. Arg-127 contacts (2S)-2-hydroxy-3-oxobutyl phosphate.

It belongs to the DMRL synthase family.

It catalyses the reaction (2S)-2-hydroxy-3-oxobutyl phosphate + 5-amino-6-(D-ribitylamino)uracil = 6,7-dimethyl-8-(1-D-ribityl)lumazine + phosphate + 2 H2O + H(+). Its pathway is cofactor biosynthesis; riboflavin biosynthesis; riboflavin from 2-hydroxy-3-oxobutyl phosphate and 5-amino-6-(D-ribitylamino)uracil: step 1/2. Its function is as follows. Catalyzes the formation of 6,7-dimethyl-8-ribityllumazine by condensation of 5-amino-6-(D-ribitylamino)uracil with 3,4-dihydroxy-2-butanone 4-phosphate. This is the penultimate step in the biosynthesis of riboflavin. This Thermococcus onnurineus (strain NA1) protein is 6,7-dimethyl-8-ribityllumazine synthase.